The following is a 127-amino-acid chain: Phosphoribosyl-AMP cyclohydrolase (127 aa).

D75 provides a ligand contact to Mg(2+). C76 serves as a coordination point for Zn(2+). Mg(2+)-binding residues include D77 and D79. Residues C93 and C100 each contribute to the Zn(2+) site.

Belongs to the PRA-CH family. In terms of assembly, homodimer. It depends on Mg(2+) as a cofactor. Requires Zn(2+) as cofactor.

It is found in the cytoplasm. It carries out the reaction 1-(5-phospho-beta-D-ribosyl)-5'-AMP + H2O = 1-(5-phospho-beta-D-ribosyl)-5-[(5-phospho-beta-D-ribosylamino)methylideneamino]imidazole-4-carboxamide. The protein operates within amino-acid biosynthesis; L-histidine biosynthesis; L-histidine from 5-phospho-alpha-D-ribose 1-diphosphate: step 3/9. Functionally, catalyzes the hydrolysis of the adenine ring of phosphoribosyl-AMP. The polypeptide is Phosphoribosyl-AMP cyclohydrolase (Desulfotalea psychrophila (strain LSv54 / DSM 12343)).